A 692-amino-acid chain; its full sequence is SH3 domain-containing protein 21 (692 aa).

A disordered region spans residues 1 to 60 (MVQSELQLQPRAGGRAEAASWGDRGNDKGGFGNPDMPSVSPGPQRPPKLSSLAYDSPPDY). The SH3 domain occupies 65-126 (SHPEAYRVLF…PDNFVLPPPP (62 aa)). Disordered stretches follow at residues 132–501 (PRKV…EVLP), 536–605 (PKGG…SQET), and 672–692 (VMQG…TQTY). Residues 177-186 (PSRDSQKLTS) are compositionally biased toward basic and acidic residues. The segment covering 210–220 (TQTPQQRSVSS) has biased composition (polar residues). 3 stretches are compositionally biased toward basic and acidic residues: residues 378 to 396 (VSTR…EALQ), 490 to 501 (NEERLLRGEVLP), and 542 to 582 (SKEE…KEEV). The stretch at 628 to 678 (SLRGEVESLRRALELMGVQLERKLTDIWEELKSEKEQRQRLEVQVMQGTQK) forms a coiled coil. Over residues 673-692 (MQGTQKSQTPRIIHAQTQTY) the composition is skewed to polar residues.

This is SH3 domain-containing protein 21 (SH3D21) from Macaca fascicularis (Crab-eating macaque).